Reading from the N-terminus, the 157-residue chain is Putative glutathione-dependent formaldehyde-activating enzyme (157 aa).

Residues 3–134 (LEGSCHCGAV…WVEIESREQD (132 aa)) enclose the CENP-V/GFA domain. Zn(2+) is bound by residues Cys7, Cys9, Cys27, Cys29, Cys32, Cys79, and Cys82.

This sequence belongs to the Gfa family. Requires Zn(2+) as cofactor.

The enzyme catalyses S-(hydroxymethyl)glutathione = glutathione + formaldehyde. It functions in the pathway one-carbon metabolism; formaldehyde degradation; formate from formaldehyde (glutathione route): step 1/3. Catalyzes the condensation of formaldehyde and glutathione to S-hydroxymethylglutathione. The polypeptide is Putative glutathione-dependent formaldehyde-activating enzyme (Halomonas elongata (strain ATCC 33173 / DSM 2581 / NBRC 15536 / NCIMB 2198 / 1H9)).